We begin with the raw amino-acid sequence, 112 residues long: T cell receptor alpha variable 9-1 (112 aa).

The first 20 residues, 1–20, serve as a signal peptide directing secretion; sequence MNSSPGPAIALFLMFGGING. The Ig-like domain maps to 21–112; it reads DSVVQTEGQV…DSAVYFCALS (92 aa). N41 carries an N-linked (GlcNAc...) asparagine glycan. C42 and C109 are joined by a disulfide.

As to quaternary structure, alpha-beta TR is a heterodimer composed of an alpha and beta chain; disulfide-linked. The alpha-beta TR is associated with the transmembrane signaling CD3 coreceptor proteins to form the TR-CD3 (TcR or TCR). The assembly of alpha-beta TR heterodimers with CD3 occurs in the endoplasmic reticulum where a single alpha-beta TR heterodimer associates with one CD3D-CD3E heterodimer, one CD3G-CD3E heterodimer and one CD247 homodimer forming a stable octameric structure. CD3D-CD3E and CD3G-CD3E heterodimers preferentially associate with TR alpha and TR beta chains, respectively. The association of the CD247 homodimer is the last step of TcR assembly in the endoplasmic reticulum and is required for transport to the cell surface.

It localises to the cell membrane. Its function is as follows. V region of the variable domain of T cell receptor (TR) alpha chain that participates in the antigen recognition. Alpha-beta T cell receptors are antigen specific receptors which are essential to the immune response and are present on the cell surface of T lymphocytes. Recognize peptide-major histocompatibility (MH) (pMH) complexes that are displayed by antigen presenting cells (APC), a prerequisite for efficient T cell adaptive immunity against pathogens. Binding of alpha-beta TR to pMH complex initiates TR-CD3 clustering on the cell surface and intracellular activation of LCK that phosphorylates the ITAM motifs of CD3G, CD3D, CD3E and CD247 enabling the recruitment of ZAP70. In turn ZAP70 phosphorylates LAT, which recruits numerous signaling molecules to form the LAT signalosome. The LAT signalosome propagates signal branching to three major signaling pathways, the calcium, the mitogen-activated protein kinase (MAPK) kinase and the nuclear factor NF-kappa-B (NF-kB) pathways, leading to the mobilization of transcription factors that are critical for gene expression and essential for T cell growth and differentiation. The T cell repertoire is generated in the thymus, by V-(D)-J rearrangement. This repertoire is then shaped by intrathymic selection events to generate a peripheral T cell pool of self-MH restricted, non-autoaggressive T cells. Post-thymic interaction of alpha-beta TR with the pMH complexes shapes TR structural and functional avidity. The chain is T cell receptor alpha variable 9-1 from Homo sapiens (Human).